A 642-amino-acid polypeptide reads, in one-letter code: Kinesin-like protein KIN-7L (642 aa).

The Kinesin motor domain occupies lysine 3–valine 337. Low complexity predominate over residues proline 12 to threonine 27. The segment at proline 12 to tryptophan 33 is disordered. Glycine 94 to threonine 101 serves as a coordination point for ATP. Coiled-coil stretches lie at residues valine 343–serine 428 and arginine 540–alanine 612.

This sequence belongs to the TRAFAC class myosin-kinesin ATPase superfamily. Kinesin family. KIN-7 subfamily.

This Oryza sativa subsp. japonica (Rice) protein is Kinesin-like protein KIN-7L.